An 82-amino-acid chain; its full sequence is Small ribosomal subunit protein bS16 (82 aa).

This sequence belongs to the bacterial ribosomal protein bS16 family.

This Vibrio atlanticus (strain LGP32) (Vibrio splendidus (strain Mel32)) protein is Small ribosomal subunit protein bS16.